The primary structure comprises 158 residues: Superoxide dismutase [Cu-Zn] (158 aa).

Cu cation is bound by residues His-46, His-48, and His-63. A disulfide bridge connects residues Cys-57 and Cys-149. His-63, His-71, His-80, and Asp-83 together coordinate Zn(2+). His-120 is a Cu cation binding site.

Belongs to the Cu-Zn superoxide dismutase family. In terms of assembly, homodimer. The cofactor is Cu cation. It depends on Zn(2+) as a cofactor.

The protein resides in the cytoplasm. The catalysed reaction is 2 superoxide + 2 H(+) = H2O2 + O2. In terms of biological role, destroys radicals which are normally produced within the cells and which are toxic to biological systems. This is Superoxide dismutase [Cu-Zn] (SODC) from Brugia pahangi (Filarial nematode worm).